Here is a 440-residue protein sequence, read N- to C-terminus: Thymidine phosphorylase (440 aa).

Belongs to the thymidine/pyrimidine-nucleoside phosphorylase family. Homodimer.

The enzyme catalyses thymidine + phosphate = 2-deoxy-alpha-D-ribose 1-phosphate + thymine. The protein operates within pyrimidine metabolism; dTMP biosynthesis via salvage pathway; dTMP from thymine: step 1/2. Its function is as follows. The enzymes which catalyze the reversible phosphorolysis of pyrimidine nucleosides are involved in the degradation of these compounds and in their utilization as carbon and energy sources, or in the rescue of pyrimidine bases for nucleotide synthesis. The polypeptide is Thymidine phosphorylase (Klebsiella pneumoniae (strain 342)).